Here is an 817-residue protein sequence, read N- to C-terminus: Leucine--tRNA ligase (817 aa).

Residues 42 to 52 (PYPSGRLHMGH) carry the 'HIGH' region motif. A 'KMSKS' region motif is present at residues 576-580 (KMSKS). K579 is a binding site for ATP.

Belongs to the class-I aminoacyl-tRNA synthetase family.

Its subcellular location is the cytoplasm. It carries out the reaction tRNA(Leu) + L-leucine + ATP = L-leucyl-tRNA(Leu) + AMP + diphosphate. This Halorhodospira halophila (strain DSM 244 / SL1) (Ectothiorhodospira halophila (strain DSM 244 / SL1)) protein is Leucine--tRNA ligase.